The following is a 343-amino-acid chain: 3-hydroxy-3-methylglutaryl-CoA lyase, cytoplasmic (343 aa).

Gly2 is lipidated: N-myristoyl glycine. The Pyruvate carboxyltransferase domain maps to 48–315 (VKIVEVGPRD…NTGVDLHKVM (268 aa)). A substrate-binding site is contributed by Arg56. The a divalent metal cation site is built by Asp57, His248, and His250. Cys281 is an active-site residue. Residue Asn290 coordinates a divalent metal cation.

It belongs to the HMG-CoA lyase family. A divalent metal cation is required as a cofactor. Present at high level in duodenum and small intestine (at protein level).

The protein resides in the cytoplasm. It localises to the cytosol. Its subcellular location is the endoplasmic reticulum membrane. It catalyses the reaction (3S)-3-hydroxy-3-methylglutaryl-CoA = acetoacetate + acetyl-CoA. Its pathway is metabolic intermediate metabolism; (S)-3-hydroxy-3-methylglutaryl-CoA degradation; acetoacetate from (S)-3-hydroxy-3-methylglutaryl-CoA: step 1/1. Functionally, non-mitochondrial 3-hydroxy-3-methylglutaryl-CoA lyase that catalyzes a cation-dependent cleavage of (S)-3-hydroxy-3-methylglutaryl-CoA into acetyl-CoA and acetoacetate, a key step in ketogenesis, the products of which support energy production in nonhepatic animal tissues. The chain is 3-hydroxy-3-methylglutaryl-CoA lyase, cytoplasmic (Hmgcll1) from Rattus norvegicus (Rat).